Consider the following 284-residue polypeptide: NAD kinase (284 aa).

The active-site Proton acceptor is Asp70. NAD(+) contacts are provided by residues 70-71 (DG), 139-140 (NE), Lys167, Asp169, Leu177, 180-185 (TAYNLS), and Gln236.

Belongs to the NAD kinase family. The cofactor is a divalent metal cation.

The protein resides in the cytoplasm. The enzyme catalyses NAD(+) + ATP = ADP + NADP(+) + H(+). Its function is as follows. Involved in the regulation of the intracellular balance of NAD and NADP, and is a key enzyme in the biosynthesis of NADP. Catalyzes specifically the phosphorylation on 2'-hydroxyl of the adenosine moiety of NAD to yield NADP. This chain is NAD kinase, found in Helicobacter pylori (strain Shi470).